The sequence spans 428 residues: Enolase (428 aa).

Residue Q163 coordinates (2R)-2-phosphoglycerate. E205 (proton donor) is an active-site residue. Mg(2+) contacts are provided by D242, E286, and D313. (2R)-2-phosphoglycerate is bound by residues K338, R367, S368, and K389. K338 acts as the Proton acceptor in catalysis.

This sequence belongs to the enolase family. It depends on Mg(2+) as a cofactor.

It is found in the cytoplasm. It localises to the secreted. Its subcellular location is the cell surface. It catalyses the reaction (2R)-2-phosphoglycerate = phosphoenolpyruvate + H2O. It functions in the pathway carbohydrate degradation; glycolysis; pyruvate from D-glyceraldehyde 3-phosphate: step 4/5. Its function is as follows. Catalyzes the reversible conversion of 2-phosphoglycerate (2-PG) into phosphoenolpyruvate (PEP). It is essential for the degradation of carbohydrates via glycolysis. This chain is Enolase, found in Bordetella avium (strain 197N).